An 801-amino-acid polypeptide reads, in one-letter code: K(+)-insensitive pyrophosphate-energized proton pump (801 aa).

The next 5 helical transmembrane spans lie at 27 to 47, 81 to 101, 109 to 129, 170 to 190, and 201 to 221; these read VIVMVIGVVALAALVVAGILV, TLGVFAVVVFFLLMLLPADDW, VFFLIGALFSATTGYTGMWLA, GVVGMFTVGLGLLGASCVVLV, and GFGLGAALIAMFMRVGGGIFT. Lys-222 lines the substrate pocket. Residues Asp-225, Asp-229, Asn-252, and Asp-255 each coordinate Mg(2+). The next 7 helical transmembrane spans lie at 261-281, 292-312, 328-348, 372-392, 406-426, 429-449, and 453-473; these read AGMAADLFESYAVTLVAALIL, AFPLIVPAIGVLTAMIGIFAV, GFFVSAVFSLALVAVAVYVYL, ILAMVAVAIGIVLAALIQQLT, IGKSSLTGAATVVLAGISVGL, AVYTALLIGLGVYGAFLLGGT, and LALFAVALAGTGLLTTVGVIV. Residue Asp-483 participates in Mg(2+) binding. The next 4 helical transmembrane spans lie at 515–535, 571–591, 641–661, and 663–683; these read AITKGIAIATAVLAASALFGS, VGLIAGAAVVFLFSGLAINAV, LLAVLAPIAIGFTLGVGALGA, and LAGAIGTGTLMAVFLANSGGA. Residues Asp-685, Asp-711, and Asp-715 each contribute to the Ca(2+) site. Lys-718 contributes to the substrate binding site. Transmembrane regions (helical) follow at residues 724–744 and 754–774; these read AINPLLKVMNLVALLIAPAVV and LGVRIAIAVLSILVIVGAVYI.

This sequence belongs to the H(+)-translocating pyrophosphatase (TC 3.A.10) family. K(+)-insensitive subfamily. Homodimer. Requires Mg(2+) as cofactor.

It is found in the cell membrane. The enzyme catalyses diphosphate + H2O + H(+)(in) = 2 phosphate + 2 H(+)(out). Functionally, proton pump that utilizes the energy of pyrophosphate hydrolysis as the driving force for proton movement across the membrane. Generates a proton motive force. In Streptomyces avermitilis (strain ATCC 31267 / DSM 46492 / JCM 5070 / NBRC 14893 / NCIMB 12804 / NRRL 8165 / MA-4680), this protein is K(+)-insensitive pyrophosphate-energized proton pump.